The primary structure comprises 790 residues: Polyribonucleotide nucleotidyltransferase (790 aa).

Mg(2+) is bound by residues Asp498 and Asp504. The KH domain maps to 565 to 624 (PRILRIKIKPEQIGEVIGPGGRVIRAIQEQTGTKISIEEDGTVFISAANEDAARRAVREI). Residues 634-702 (GEIFYGRVVT…PDGKINLSRK (69 aa)) form the S1 motif domain. The tract at residues 710–790 (AERAATAQAP…KELLGEDEPN (81 aa)) is disordered. A compositionally biased stretch (basic and acidic residues) spans 739–755 (PERRPGPPTPRRPEQRG). The span at 757-772 (SRPPRPQAQRSTPPPG) shows a compositional bias: pro residues.

It belongs to the polyribonucleotide nucleotidyltransferase family. The cofactor is Mg(2+).

It localises to the cytoplasm. The catalysed reaction is RNA(n+1) + phosphate = RNA(n) + a ribonucleoside 5'-diphosphate. Its function is as follows. Involved in mRNA degradation. Catalyzes the phosphorolysis of single-stranded polyribonucleotides processively in the 3'- to 5'-direction. In Thermomicrobium roseum (strain ATCC 27502 / DSM 5159 / P-2), this protein is Polyribonucleotide nucleotidyltransferase.